A 107-amino-acid polypeptide reads, in one-letter code: Thioredoxin (107 aa).

Residues 2-107 (SEVLHINDAD…QLANFINQHI (106 aa)) form the Thioredoxin domain. A disulfide bridge connects residues cysteine 32 and cysteine 35.

This sequence belongs to the thioredoxin family.

Functionally, participates in various redox reactions through the reversible oxidation of its active center dithiol to a disulfide and catalyzes dithiol-disulfide exchange reactions. The sequence is that of Thioredoxin (trxA) from Haemophilus influenzae (strain ATCC 51907 / DSM 11121 / KW20 / Rd).